Consider the following 168-residue polypeptide: Transcription antitermination protein NusB (168 aa).

The interval 147–168 is disordered; that stretch reads RGLINNSSRNTSRSEEKHSTEK. The span at 158-168 shows a compositional bias: basic and acidic residues; sequence SRSEEKHSTEK.

This sequence belongs to the NusB family.

Involved in transcription antitermination. Required for transcription of ribosomal RNA (rRNA) genes. Binds specifically to the boxA antiterminator sequence of the ribosomal RNA (rrn) operons. The protein is Transcription antitermination protein NusB of Chlorobium phaeobacteroides (strain BS1).